Here is a 311-residue protein sequence, read N- to C-terminus: Protoheme IX farnesyltransferase (311 aa).

9 helical membrane passes run 32–52, 53–73, 104–124, 125–145, 153–173, 180–200, 224–244, 245–265, and 285–305; these read VMSL…VPIN, PWYG…AGAL, FIFG…FINW, FAAF…TIWL, IVIG…VTTG, FLLF…LSLF, KQIL…CFTG, LGGV…IYFA, and FFFS…ESLV.

The protein belongs to the UbiA prenyltransferase family. Protoheme IX farnesyltransferase subfamily.

It localises to the cell inner membrane. The enzyme catalyses heme b + (2E,6E)-farnesyl diphosphate + H2O = Fe(II)-heme o + diphosphate. Its pathway is porphyrin-containing compound metabolism; heme O biosynthesis; heme O from protoheme: step 1/1. Functionally, converts heme B (protoheme IX) to heme O by substitution of the vinyl group on carbon 2 of heme B porphyrin ring with a hydroxyethyl farnesyl side group. The polypeptide is Protoheme IX farnesyltransferase (Bartonella tribocorum (strain CIP 105476 / IBS 506)).